Consider the following 1596-residue polypeptide: Protein son of sevenless (1596 aa).

The DH domain maps to 248 to 434; the sequence is TYEETVKELI…HPLHCDLEKV (187 aa). In terms of domain architecture, PH spans 480–588; the sequence is EFIREDSLSK…WMADLLMVIT (109 aa). An N-terminal Ras-GEF domain is found at 637–792; sequence GVPMIKGATL…SVLKIVQRKN (156 aa). A Ras-GEF domain is found at 829-1066; the sequence is HPLELARQLT…YNESLRIEPR (238 aa). Disordered stretches follow at residues 1073-1105, 1175-1212, 1235-1291, 1340-1392, and 1465-1596; these read KFPR…LSNS, RNTS…AHVW, EHLP…TAST, RAVP…NHST, and PLPI…TNEE. The span at 1096 to 1105 shows a compositional bias: low complexity; the sequence is TNSSSKLSNS. Composition is skewed to polar residues over residues 1175–1195 and 1280–1291; these read RNTS…NNGE and MQNSPTHSTAST. Residues 1352–1366 show a composition bias toward basic and acidic residues; sequence ERTESCADMAQKRQA. The segment covering 1469 to 1489 has biased composition (low complexity); the sequence is SPAASSSTTTSPLTPAMSPMS. The span at 1526 to 1542 shows a compositional bias: basic residues; that stretch reads HHQHHATHLPHHPHQHH. Serine 1550 and serine 1551 each carry phosphoserine.

As to quaternary structure, may form a complex with sevenless and DRK.

Functionally, promotes the exchange of Ras-bound GDP by GTP. Functions in signaling pathways initiated by the sevenless and epidermal growth factor receptor tyrosine kinases; implies a role for the ras pathway in neuronal development. This is Protein son of sevenless (Sos) from Drosophila melanogaster (Fruit fly).